The chain runs to 792 residues: Zinc finger CCCH domain-containing protein 11A (792 aa).

3 consecutive C3H1-type zinc fingers follow at residues P2–A29, L31–I57, and K60–S87. 3 disordered regions span residues P103 to G191, K223 to E331, and A345 to Q443. The residue at position 108 (S108) is a Phosphoserine. Residues K114 and K124 each participate in a glycyl lysine isopeptide (Lys-Gly) (interchain with G-Cter in SUMO2) cross-link. Positions T115–L135 are enriched in polar residues. Position 132 is a phosphoserine (S132). Residue K140 forms a Glycyl lysine isopeptide (Lys-Gly) (interchain with G-Cter in SUMO2) linkage. Phosphoserine occurs at positions 149, 171, and 289. The segment covering A160 to D175 has biased composition (acidic residues). 2 stretches are compositionally biased toward basic and acidic residues: residues K308–E331 and A345–E360. A coiled-coil region spans residues E338 to E360. S346 carries the phosphoserine modification. Residues S367 to S376 show a composition bias toward low complexity. 2 stretches are compositionally biased toward basic and acidic residues: residues Q393–T405 and Q431–Q443. K454 is covalently cross-linked (Glycyl lysine isopeptide (Lys-Gly) (interchain with G-Cter in SUMO2)). Disordered regions lie at residues A458–L531 and Q545–Y571. A compositionally biased stretch (polar residues) spans V461 to P473. 2 stretches are compositionally biased toward basic and acidic residues: residues G492–L501 and Q545–A558. K601 participates in a covalent cross-link: Glycyl lysine isopeptide (Lys-Gly) (interchain with G-Cter in SUMO2). The segment at L690 to S750 is disordered. Residues M698 to A715 are compositionally biased toward polar residues. Low complexity predominate over residues S717–S730.

In terms of assembly, interacts with TREX complex components THOC2, DDX39 and POLDIP3; the interactions are ATP-dependent. Interacts with PABPN1; this interaction retains ZC3H11A in nuclear speckles. Interacts with KPNA3.

The protein localises to the nucleus speckle. Its function is as follows. Through its association with TREX complex components, may participate in the export and post-transcriptional coordination of selected mRNA transcripts, including those required to maintain the metabolic processes in embryonic cells. Binds RNA. This Mus musculus (Mouse) protein is Zinc finger CCCH domain-containing protein 11A (Zc3h11a).